Here is a 632-residue protein sequence, read N- to C-terminus: tRNA uridine 5-carboxymethylaminomethyl modification enzyme MnmG (632 aa).

FAD contacts are provided by residues 13–18 (GGGHAG), Val125, and Ser180. Residue 273-287 (GPRYCPSIEDKVMRF) coordinates NAD(+). FAD is bound at residue Gln370.

This sequence belongs to the MnmG family. As to quaternary structure, homodimer. Heterotetramer of two MnmE and two MnmG subunits. The cofactor is FAD.

Its subcellular location is the cytoplasm. In terms of biological role, NAD-binding protein involved in the addition of a carboxymethylaminomethyl (cmnm) group at the wobble position (U34) of certain tRNAs, forming tRNA-cmnm(5)s(2)U34. This chain is tRNA uridine 5-carboxymethylaminomethyl modification enzyme MnmG, found in Vibrio vulnificus (strain CMCP6).